Consider the following 2087-residue polypeptide: Rho GTPase-activating protein 32 (2087 aa).

A PX; atypical domain is found at 131–245 (GSIQLSLSEE…LTWMEIDNKG (115 aa)). The SH3 domain maps to 259-321 (PAVGAAHVIK…PGHCVELINQ (63 aa)). The region spanning 372–567 (CDLGEHLLNS…FILNHVDVLF (196 aa)) is the Rho-GAP domain. A phosphoserine mark is found at S706, S709, S732, and S738. A disordered region spans residues 818–858 (FLDSPGYSKDKPSANKKDAETGSSQCQTPGSTASSEPVSPL). The span at 825–837 (SKDKPSANKKDAE) shows a compositional bias: basic and acidic residues. Over residues 838–854 (TGSSQCQTPGSTASSEP) the composition is skewed to polar residues. Phosphoserine is present on residues S852, S856, and S892. The segment covering 927-938 (SNTTAQNASSST) has biased composition (low complexity). 3 disordered regions span residues 927-1038 (SNTT…PPKN), 1103-1143 (PAEQ…EQHH), and 1169-1257 (VPLD…ENTS). The residue at position 952 (S952) is a Phosphoserine. Low complexity-rich tracts occupy residues 994–1005 (SVSSSQSKAVAS) and 1019–1029 (QDSVPVSSVSL). Residues 1124 to 1138 (TTATGDPTHSNTTES) are compositionally biased toward polar residues. The segment covering 1172 to 1182 (DSEKSDDHVSF) has biased composition (basic and acidic residues). Polar residues predominate over residues 1188–1203 (GKNSMPTVSFLDQDQS). The residue at position 1203 (S1203) is a Phosphoserine. Over residues 1222–1232 (DKLHHPLEFAD) the composition is skewed to basic and acidic residues. An interaction with GAB2 region spans residues 1391-1711 (RVPLLHLRAE…YSYAGLAPRP (321 aa)). Asymmetric dimethylarginine occurs at positions 1523 and 1533. The residue at position 1585 (S1585) is a Phosphoserine. The tract at residues 1685–2087 (PNRDFAFYNP…QHPETQIHAE (403 aa)) is interaction with FYN. Residues 1798-1896 (PGKTGLLSVA…QFCESKNGPP (99 aa)) form a disordered region. Residues 1823–1838 (GEDRFYRRHPEAEMDR) show a composition bias toward basic and acidic residues. Over residues 1847–1862 (STQPEKPSLPQKQSSL) the composition is skewed to polar residues. The span at 1875 to 1889 (PEHRAHQEASHRQFC) shows a compositional bias: basic and acidic residues. Position 2037 is an omega-N-methylarginine (R2037).

Belongs to the PX domain-containing GAP family. In terms of assembly, interacts with NTRK1 (via cytoplasmic domain); the interaction is independent of the phosphorylation state of NTRK1. Interacts with SHC3 (via SH2 domain). Interacts with RASA1 (via SH3 domain); the interaction is necessary for the Ras activation and cell transforming activities of ARHGAP32. Interacts with GAB1 and GAB2. Interacts with CRK and CRKL. Found in a complex with CRKL and BCAR1; upon EGF stimulation BCAR1 may be replaced by EGFR. Interacts with NCK1 (via SH3 domain); NCK1 recruits phosphorylated BCAR1 to the complex. Isoform 2 interacts with FYN; the interaction appears to be dependent on tyrosine phosphorylation of ARHGAP32. Interacts with EGFR; the interaction requires EGF stimulation and is increased by SHC3. Interacts with CDC42; the interaction requires constitutively active CDC42. Interacts with CTNNB1. Interacts with GRIN2B. Interacts with DLG4 and CDH2. Interacts with GPHN. Post-translationally, isoform 2 is phosphorylated on multiple tyrosine residues by FYN. Phosphorylated tyrosine residues undergo dephosphorylation after stimulation of NMDA receptors. Phosphorylated in vitro by CaMK2 in the presence of calmodulin and calcium; which inhibits GAP activity. As to expression, isoform 1 and isoform 2 are highly expressed in brain and testis. Isoform 1 is also expressed in other tissues such as lung, liver and spleen.

The protein localises to the postsynaptic density. Its subcellular location is the cell projection. It localises to the dendritic spine. The protein resides in the cytoplasm. It is found in the cell cortex. The protein localises to the endosome membrane. Its subcellular location is the golgi apparatus membrane. It localises to the endoplasmic reticulum membrane. The protein resides in the membrane. In terms of biological role, GTPase-activating protein (GAP) promoting GTP hydrolysis on RHOA, CDC42 and RAC1 small GTPases. May be involved in the differentiation of neuronal cells during the formation of neurite extensions. Involved in NMDA receptor activity-dependent actin reorganization in dendritic spines. May mediate cross-talks between Ras- and Rho-regulated signaling pathways in cell growth regulation. Isoform 2 has higher GAP activity. This Homo sapiens (Human) protein is Rho GTPase-activating protein 32 (ARHGAP32).